The chain runs to 377 residues: 26S proteasome non-ATPase regulatory subunit 4 (377 aa).

The VWFA domain occupies 5 to 188; that stretch reads STMVCVDNSE…LADALISSPI (184 aa). Lys-122 is covalently cross-linked (Glycyl lysine isopeptide (Lys-Gly) (interchain with G-Cter in SUMO2)). An interaction with UBQLN1 region spans residues 197 to 262; that stretch reads LGLGASDFEF…TEDSDDALLK (66 aa). The UIM 1 domain maps to 211–230; it reads SADPELALALRVSMEEQRQR. An essential for ubiquitin-binding region spans residues 216-220; the sequence is LALAL. Residues 224 to 237 show a composition bias toward basic and acidic residues; it reads MEEQRQRQEEEARR. The disordered stretch occupies residues 224 to 255; that stretch reads MEEQRQRQEEEARRAAAASAAEAGIATTGTED. 2 positions are modified to phosphothreonine: Thr-250 and Thr-253. A phosphoserine mark is found at Ser-256 and Ser-266. The UIM 2 domain maps to 282 to 301; that stretch reads TEEEQIAYAMQMSLQGAEFG. Positions 287 to 291 are essential for ubiquitin-binding; the sequence is IAYAM. Disordered regions lie at residues 300–327 and 341–377; these read FGQAESADIDASSAMDTSEPAKEEDDYD and NLPGVDPNNEAIRNAMGSLASQATKDGKKDKKEEDKK. Phosphoserine occurs at positions 358 and 361. Residues 365–377 show a composition bias toward basic and acidic residues; the sequence is KDGKKDKKEEDKK.

It belongs to the proteasome subunit S5A family. As to quaternary structure, component of the 19S proteasome regulatory particle complex. The 26S proteasome consists of a 20S core particle (CP) and two 19S regulatory subunits (RP). The regulatory particle is made of a lid composed of 9 subunits, a base containing 6 ATPases and few additional components including PSMD4. Interacts with NUB1. Interacts with SQSTM1. Interacts with UBQLN4. Interacts with UBE3A. Interacts with UBQLN1 (via ubiquitin-like domain). Interacts with DDI2.

Functionally, component of the 26S proteasome, a multiprotein complex involved in the ATP-dependent degradation of ubiquitinated proteins. This complex plays a key role in the maintenance of protein homeostasis by removing misfolded or damaged proteins, which could impair cellular functions, and by removing proteins whose functions are no longer required. Therefore, the proteasome participates in numerous cellular processes, including cell cycle progression, apoptosis, or DNA damage repair. PSMD4 acts as an ubiquitin receptor subunit through ubiquitin-interacting motifs and selects ubiquitin-conjugates for destruction. Displays a preferred selectivity for longer polyubiquitin chains. This chain is 26S proteasome non-ATPase regulatory subunit 4 (PSMD4), found in Homo sapiens (Human).